A 207-amino-acid polypeptide reads, in one-letter code: Uracil phosphoribosyltransferase (207 aa).

5-phospho-alpha-D-ribose 1-diphosphate-binding positions include arginine 77, arginine 102, and 129 to 137; that span reads DPMLATGGS. Uracil-binding positions include isoleucine 192 and 197–199; that span reads GDA. Aspartate 198 provides a ligand contact to 5-phospho-alpha-D-ribose 1-diphosphate.

It belongs to the UPRTase family. Mg(2+) is required as a cofactor.

It catalyses the reaction UMP + diphosphate = 5-phospho-alpha-D-ribose 1-diphosphate + uracil. It participates in pyrimidine metabolism; UMP biosynthesis via salvage pathway; UMP from uracil: step 1/1. With respect to regulation, allosterically activated by GTP. Its function is as follows. Catalyzes the conversion of uracil and 5-phospho-alpha-D-ribose 1-diphosphate (PRPP) to UMP and diphosphate. This chain is Uracil phosphoribosyltransferase, found in Ureaplasma parvum serovar 3 (strain ATCC 27815 / 27 / NCTC 11736).